Reading from the N-terminus, the 416-residue chain is MNMALISLAIDYKKSPIEVRSEFALSGLDVSMLYRSILAIDNVVHAVILSTCNRTEVYLEISDLRVVDDILVWWQGYVRNPNYKIKDYFKLRQGTEVIMHLMKLACGLESMVLGEPQILGQVKDSYTLSKKNHAIGKELDRVFQKVFATAKRVRSETRIGHCPVSVAFSAITLAKRQLDNISSKNVLIIGAGQTGELLFRHVTALAPKQIMLANRTIEKAQKITSAFRNASAHYLSELPQLIKKADIIIAAVNVLEYIVTCKYVGDKPRVFIDISIPQALDPKLGELEQNVYYCVDDINAVIEDNKDKRKYESSKAQKIIVKSLEEYLEKEKAIISNSAIKELFQKADGLVDLSLEKSLAKIRNGKDAEEIIKRFAYEIKKKVLHYPVVGMKEASKQGRSDCLVCMKRMFGLNVEK.

Substrate is bound by residues 51–54 (TCNR), S110, 115–117 (EPQ), and Q121. Residue C52 is the Nucleophile of the active site. An NADP(+)-binding site is contributed by 190–195 (GAGQTG).

This sequence belongs to the glutamyl-tRNA reductase family. Homodimer.

It catalyses the reaction (S)-4-amino-5-oxopentanoate + tRNA(Glu) + NADP(+) = L-glutamyl-tRNA(Glu) + NADPH + H(+). It functions in the pathway porphyrin-containing compound metabolism; protoporphyrin-IX biosynthesis; 5-aminolevulinate from L-glutamyl-tRNA(Glu): step 1/2. Catalyzes the NADPH-dependent reduction of glutamyl-tRNA(Glu) to glutamate 1-semialdehyde (GSA). In Francisella tularensis subsp. tularensis (strain FSC 198), this protein is Glutamyl-tRNA reductase.